The chain runs to 360 residues: Capsular polysaccharide phosphotransferase LcbA (360 aa).

This sequence belongs to the stealth family.

Functionally, part of a group II capsule biosynthesis locus. The polypeptide is Capsular polysaccharide phosphotransferase LcbA (lcbA) (Aeromonas hydrophila).